The sequence spans 374 residues: Probable aminopeptidase YDR415C (374 aa).

A signal peptide spans 1–18 (MRIQSLFVLFNVAIIAWS). Zn(2+) contacts are provided by His177, Asp196, Glu235, Asp262, and His340.

This sequence belongs to the peptidase M28 family. M28E subfamily. Zn(2+) is required as a cofactor.

The protein is Probable aminopeptidase YDR415C of Saccharomyces cerevisiae (strain ATCC 204508 / S288c) (Baker's yeast).